A 369-amino-acid chain; its full sequence is MTNHNALISDAKGSIGVAVRVPNQSLFSPGGGRYISIPRKKLVQKLEADPSQTRIHTWIEAMRASSPTRTRPGNISPLPESDEEDEYSSWMAQHPSALTMFEEIAEASKGKQIVMFLDYDGTLSPIVENPDRAYMSEEMREAVKGVARYFPTAIVTGRCRDKVRRFVKLPGLYYAGSHGMDIKGPSKRNKHNKNNKGVLFQAANEFLPMIDKVSKCLVEKMRDIEGANVENNKFCVSVHYRCVDQKDWGLVAEHVTSILSEYPKLRLTQGRKVLEIRPTIKWDKGKALEFLLESLGFANSNDVLPIYIGDDRTDEDAFKVLRNKGQGFGILVSKIPKETSATYSLQEPSEVGEFLQRLVEWKQMSLRGR.

Residues 63 to 85 (RASSPTRTRPGNISPLPESDEED) form a disordered region.

Belongs to the trehalose phosphatase family. It depends on a divalent metal cation as a cofactor.

It catalyses the reaction alpha,alpha-trehalose 6-phosphate + H2O = alpha,alpha-trehalose + phosphate. It participates in glycan biosynthesis; trehalose biosynthesis. In terms of biological role, removes the phosphate from trehalose 6-phosphate to produce free trehalose. Trehalose accumulation in plant may improve abiotic stress tolerance. The polypeptide is Probable trehalose-phosphate phosphatase D (TPPD) (Arabidopsis thaliana (Mouse-ear cress)).